Here is a 376-residue protein sequence, read N- to C-terminus: Chaperone protein DnaJ (376 aa).

The J domain occupies 5–70; it reads DYYEVLGVAK…QKRAAYDQYG (66 aa). Residues 136-214 form a CR-type zinc finger; the sequence is GYDTQIRVPS…CHGSGKVKET (79 aa). Positions 149, 152, 166, 169, 188, 191, 202, and 205 each coordinate Zn(2+). CXXCXGXG motif repeat units lie at residues 149–156, 166–173, 188–195, and 202–209; these read CGICHGSG, CPTCHGQG, CPKCHGTG, and CVHCHGSG.

Belongs to the DnaJ family. Homodimer. Zn(2+) serves as cofactor.

Its subcellular location is the cytoplasm. Participates actively in the response to hyperosmotic and heat shock by preventing the aggregation of stress-denatured proteins and by disaggregating proteins, also in an autonomous, DnaK-independent fashion. Unfolded proteins bind initially to DnaJ; upon interaction with the DnaJ-bound protein, DnaK hydrolyzes its bound ATP, resulting in the formation of a stable complex. GrpE releases ADP from DnaK; ATP binding to DnaK triggers the release of the substrate protein, thus completing the reaction cycle. Several rounds of ATP-dependent interactions between DnaJ, DnaK and GrpE are required for fully efficient folding. Also involved, together with DnaK and GrpE, in the DNA replication of plasmids through activation of initiation proteins. This chain is Chaperone protein DnaJ, found in Burkholderia thailandensis (strain ATCC 700388 / DSM 13276 / CCUG 48851 / CIP 106301 / E264).